The sequence spans 246 residues: Ribonuclease PH (246 aa).

Residues Arg-91 and 129-131 (GTR) each bind phosphate.

It belongs to the RNase PH family. As to quaternary structure, homohexameric ring arranged as a trimer of dimers.

It catalyses the reaction tRNA(n+1) + phosphate = tRNA(n) + a ribonucleoside 5'-diphosphate. Its function is as follows. Phosphorolytic 3'-5' exoribonuclease that plays an important role in tRNA 3'-end maturation. Removes nucleotide residues following the 3'-CCA terminus of tRNAs; can also add nucleotides to the ends of RNA molecules by using nucleoside diphosphates as substrates, but this may not be physiologically important. Probably plays a role in initiation of 16S rRNA degradation (leading to ribosome degradation) during starvation. This Burkholderia vietnamiensis (strain G4 / LMG 22486) (Burkholderia cepacia (strain R1808)) protein is Ribonuclease PH.